The chain runs to 502 residues: MEFSVKSGSPEKQRSACIVVGVFEPRRLSPVAEQLDKISDGYISSLLRRGDLEGKPGQMLLLHQVPGVLSERVLLVGCGKERELGERQYKEIIQKTISTLNETGSMEAVCFLTELHVKGRDTYWKVRQAVEATKDGLYTFNQFKSVKPETRRPLRKLVFNVPTRRELSLGEKAITHGLAIASGVKASKDLGNMPPNVANPAYLASQARRLADDYESVTTKIIGEQEMEKLGMTSYLAVGRGSKNESMMSIIEYKGNPDSDAKPIVLVGKGLTFDSGGISLKPGEGMDEMKYDMCGAASVFGTMKALAKLNLPINVIGVLAGCENMPGSNAYRPGDILTTMSGQTVEVLNTDAEGRLVLCDALTYVERFEPDCVVDVATLTGACVIALGHHISGVLSNHNPLAHELVNASEQSSDRAWRLPMADEYHEQLKSPFADMANIGGRPGGTITAGCFLSKFAKKYNWAHIDIAGTAWKSGAAKGSTGRPVSMLVQFLLNRSGQETEE.

Mn(2+)-binding residues include lysine 269 and aspartate 274. Lysine 281 is an active-site residue. Positions 292, 351, and 353 each coordinate Mn(2+). Arginine 355 is an active-site residue.

The protein belongs to the peptidase M17 family. The cofactor is Mn(2+).

It localises to the cytoplasm. The enzyme catalyses Release of an N-terminal amino acid, Xaa-|-Yaa-, in which Xaa is preferably Leu, but may be other amino acids including Pro although not Arg or Lys, and Yaa may be Pro. Amino acid amides and methyl esters are also readily hydrolyzed, but rates on arylamides are exceedingly low.. It carries out the reaction Release of an N-terminal amino acid, preferentially leucine, but not glutamic or aspartic acids.. Its function is as follows. Presumably involved in the processing and regular turnover of intracellular proteins. Catalyzes the removal of unsubstituted N-terminal amino acids from various peptides. This is Probable cytosol aminopeptidase from Vibrio parahaemolyticus serotype O3:K6 (strain RIMD 2210633).